Consider the following 833-residue polypeptide: RNA-binding protein 5-A (833 aa).

The tract at residues 1 to 87 (MGSDKRVSRS…GYHSDGDYMD (87 aa)) is disordered. The region spanning 102–182 (KTIMLRGLPI…KTIAMHYSNP (81 aa)) is the RRM 1 domain. The RanBP2-type zinc-finger motif lies at 185–214 (KFEDWLCNKCGLYNFRRRLKCFRCGAAKAE). Positions 241-325 (SAIILRNIGP…KTIGVDFAKS (85 aa)) constitute an RRM 2 domain. Over residues 396–428 (TGAAEQGTAPQAESSSPVPATTSAVVCQSPQMY) the composition is skewed to polar residues. Disordered regions lie at residues 396–458 (TGAA…EEAA) and 523–559 (AADG…TAQQ). The span at 429–458 (QQPGSPTQSSTSTVAASATPASGTSAEEAA) shows a compositional bias: low complexity. A C2H2-type zinc finger spans residues 667-692 (LACLLCRRQFPNKDALTRHQQLSDLH). The G-patch domain occupies 761–807 (NSNIGNKMLQAMGWKEGSGLGRKSQGITAPIQAQVRMRGAGLGAKGS).

This sequence belongs to the RBM5/RBM10 family. In terms of assembly, component of the spliceosome A complex (also known as the prespliceosome). Appears to dissociate from the spliceosome upon formation of the spliceosome B complex (also known as the precatalytic spliceosome), in which the heterotrimeric U4/U6.U5 snRNPs are bound.

The protein resides in the nucleus. In terms of biological role, component of the spliceosome A complex. Regulates alternative splicing of a number of mRNAs. May modulate splice site pairing after recruitment of the U1 and U2 snRNPs to the 5' and 3' splice sites of the intron. This Xenopus laevis (African clawed frog) protein is RNA-binding protein 5-A (rbm5-a).